The sequence spans 500 residues: ADP,ATP carrier protein 5 (500 aa).

The next 11 membrane-spanning stretches (helical) occupy residues leucine 26 to leucine 46, isoleucine 62 to tyrosine 82, isoleucine 94 to tyrosine 114, tyrosine 149 to tryptophan 169, phenylalanine 184 to methionine 204, isoleucine 224 to leucine 244, leucine 287 to valine 307, leucine 328 to methionine 348, alanine 357 to phenylalanine 377, isoleucine 381 to glycine 401, and serine 469 to valine 489.

It belongs to the ADP/ATP translocase tlc family.

Its subcellular location is the cell membrane. Its function is as follows. Provides the rickettsial cell with host ATP in exchange for rickettsial ADP. This is an obligate exchange system. This energy acquiring activity is an important component of rickettsial parasitism. This is ADP,ATP carrier protein 5 (tlcE) from Rickettsia typhi (strain ATCC VR-144 / Wilmington).